The following is a 65-amino-acid chain: Alpha-toxin BeM10 (65 aa).

The region spanning 2–65 (RDGYIADDKD…IKQKVSGKCN (64 aa)) is the LCN-type CS-alpha/beta domain. Cystine bridges form between Cys12–Cys64, Cys16–Cys35, Cys22–Cys45, and Cys26–Cys47.

The protein belongs to the long (4 C-C) scorpion toxin superfamily. Sodium channel inhibitor family. Alpha subfamily. Expressed by the venom gland.

It is found in the secreted. Functionally, alpha toxins bind voltage-independently at site-3 of sodium channels (Nav) and inhibit the inactivation of the activated channels, thereby blocking neuronal transmission. Has paralytic activity in mice. The chain is Alpha-toxin BeM10 from Mesobuthus eupeus (Lesser Asian scorpion).